Reading from the N-terminus, the 90-residue chain is Small ribosomal subunit protein uS15 (90 aa).

Belongs to the universal ribosomal protein uS15 family. In terms of assembly, part of the 30S ribosomal subunit. Forms a bridge to the 50S subunit in the 70S ribosome, contacting the 23S rRNA.

In terms of biological role, one of the primary rRNA binding proteins, it binds directly to 16S rRNA where it helps nucleate assembly of the platform of the 30S subunit by binding and bridging several RNA helices of the 16S rRNA. Its function is as follows. Forms an intersubunit bridge (bridge B4) with the 23S rRNA of the 50S subunit in the ribosome. This is Small ribosomal subunit protein uS15 from Wolbachia sp. subsp. Brugia malayi (strain TRS).